The following is a 2167-amino-acid chain: Beige protein homolog 1 (2167 aa).

The BEACH-type PH domain occupies 1368–1499; the sequence is KDNDSIATIW…VRDDVLRVLN (132 aa). In terms of domain architecture, BEACH spans 1545-1839; sequence SANNSLIDGF…QIFQEPHPEK (295 aa). A Glycyl lysine isopeptide (Lys-Gly) (interchain with G-Cter in ubiquitin) cross-link involves residue lysine 1667. WD repeat units lie at residues 1927-1965, 1976-2015, 2017-2054, 2072-2111, and 2129-2167; these read THMA…HSVS, GHLC…LVRQ, TNDA…YTSK, KLDA…HNEW, and SIKG…AIWY.

Its subcellular location is the cytoplasm. The protein resides in the membrane. In terms of biological role, may be involved in protein sorting and cell wall formation. This is Beige protein homolog 1 (BPH1) from Saccharomyces cerevisiae (strain ATCC 204508 / S288c) (Baker's yeast).